The chain runs to 154 residues: Superoxide dismutase [Cu-Zn] (154 aa).

His47, His49, and His64 together coordinate Cu cation. The cysteines at positions 58 and 147 are disulfide-linked. Residues His64, His72, His81, and Asp84 each contribute to the Zn(2+) site. His121 serves as a coordination point for Cu cation. Arg144 is a substrate binding site.

Belongs to the Cu-Zn superoxide dismutase family. Homodimer. The cofactor is Cu cation. It depends on Zn(2+) as a cofactor.

It is found in the cytoplasm. It catalyses the reaction 2 superoxide + 2 H(+) = H2O2 + O2. Destroys radicals which are normally produced within the cells and which are toxic to biological systems. The polypeptide is Superoxide dismutase [Cu-Zn] (SOD1) (Claviceps purpurea (strain 20.1) (Ergot fungus)).